The chain runs to 200 residues: Late embryogenesis abundant protein 19 (200 aa).

Disordered regions lie at residues 1–158 (MASH…KSTV) and 172–200 (TEDKAGTDDGANKDTSATAAATETTARDH). Composition is skewed to basic and acidic residues over residues 13–23 (GETKAHTEEKA), 30–42 (SKDKASEAKDRAS), 53–81 (QDTKEATKEKAQAAKERASETAQAAKDKT), 88–97 (ARDKAAESKD), and 105–114 (EKTEQAKQKA). Positions 52–81 (GQDTKEATKEKAQAAKERASETAQAAKDKT) form a coiled coil. A compositionally biased stretch (low complexity) spans 115-130 (AETAGAAKQKTAETAQ). Residues 145-156 (SVLQQASEQVKS) show a composition bias toward polar residues. Residues 172–183 (TEDKAGTDDGAN) are compositionally biased toward basic and acidic residues. Positions 186-200 (TSATAAATETTARDH) are enriched in low complexity.

This sequence belongs to the LEA type 4 family. In terms of tissue distribution, expressed in the shoot apex and leaves.

Its function is as follows. Involved in response to drought stress. This is Late embryogenesis abundant protein 19 from Oryza sativa subsp. indica (Rice).